We begin with the raw amino-acid sequence, 275 residues long: Small ribosomal subunit protein uS2 (275 aa).

The segment at Ala-226–Glu-275 is disordered. The span at Ala-264 to Glu-275 shows a compositional bias: low complexity.

Belongs to the universal ribosomal protein uS2 family.

The chain is Small ribosomal subunit protein uS2 from Xanthomonas campestris pv. campestris (strain ATCC 33913 / DSM 3586 / NCPPB 528 / LMG 568 / P 25).